Consider the following 502-residue polypeptide: UPF0371 protein CLH_2534 (502 aa).

It belongs to the UPF0371 family.

In Clostridium botulinum (strain Alaska E43 / Type E3), this protein is UPF0371 protein CLH_2534.